The chain runs to 367 residues: MSGSSFLFLKSIKCILSSSCHGQNTISNTQLAAQYISKPQKQLCETVLKYFDRQYSEELGEQWWNARDVLLNPLSWQYGVLLNRFSDLTNLKQCLAELGYTNLLQQTHPESHSQTADIPLQCFIHPDPVRIPTQSHHTGWLKQYYLLNAASLLPVLALNVQEGENVLDLCAAPGGKSLAILQTATPGLLHCNEVDQHRHDWLLKTLESYVPPSLRHLLSVTLQDGRSIGTMQPGAYDKVLVDAPCSNDRSWLYTPDTHRGEMWLKERTQLPLLQKELLCSALAAVRPGGIVVYSTCTMSRAENQSVVEEVLASYPGVELQELEQQFIDSLSDHFCFAHLHPSVGQLVIPQKGKTWGPMYVSQLKKIY.

S-adenosyl-L-methionine is bound by residues 170-176 (CAAPGGK), glutamate 193, aspartate 224, and aspartate 242. Catalysis depends on cysteine 296, which acts as the Nucleophile.

The protein belongs to the class I-like SAM-binding methyltransferase superfamily. RsmB/NOP family.

It is found in the mitochondrion matrix. It catalyses the reaction cytidine(34) in mitochondrial tRNA + S-adenosyl-L-methionine = 5-methylcytidine(34) in mitochondrial tRNA + S-adenosyl-L-homocysteine + H(+). Functionally, mitochondrial tRNA methyltransferase that mediates methylation of cytosine to 5-methylcytosine (m5C) at position 34 of mt-tRNA(Met). mt-tRNA(Met) methylation at cytosine(34) takes place at the wobble position of the anticodon and initiates the formation of 5-formylcytosine (f(5)c) at this position. mt-tRNA(Met) containing the f(5)c modification at the wobble position enables recognition of the AUA codon in addition to the AUG codon, expanding codon recognition in mitochondrial translation. The chain is tRNA (cytosine(34)-C(5))-methyltransferase, mitochondrial from Danio rerio (Zebrafish).